The chain runs to 366 residues: GTP cyclohydrolase 1 type 2 homolog (366 aa).

The Zn(2+) site is built by His64, His65, Asp102, His326, and Glu329.

The protein belongs to the GTP cyclohydrolase I type 2/NIF3 family. As to quaternary structure, homohexamer.

In Staphylococcus aureus (strain COL), this protein is GTP cyclohydrolase 1 type 2 homolog.